Reading from the N-terminus, the 549-residue chain is Glucose-6-phosphate isomerase (549 aa).

E355 functions as the Proton donor in the catalytic mechanism. Residues H386 and K514 contribute to the active site.

This sequence belongs to the GPI family.

It localises to the cytoplasm. The enzyme catalyses alpha-D-glucose 6-phosphate = beta-D-fructose 6-phosphate. Its pathway is carbohydrate biosynthesis; gluconeogenesis. It functions in the pathway carbohydrate degradation; glycolysis; D-glyceraldehyde 3-phosphate and glycerone phosphate from D-glucose: step 2/4. In terms of biological role, catalyzes the reversible isomerization of glucose-6-phosphate to fructose-6-phosphate. The sequence is that of Glucose-6-phosphate isomerase from Klebsiella pneumoniae subsp. pneumoniae (strain ATCC 700721 / MGH 78578).